Consider the following 714-residue polypeptide: Fatty acid oxidation complex subunit alpha (714 aa).

The tract at residues 1-190 (MEMASAFTLN…KLGLVDDVVP (190 aa)) is enoyl-CoA hydratase. The tract at residues 306-714 (APLNSVGILG…FWKTTATDLQ (409 aa)) is 3-hydroxyacyl-CoA dehydrogenase.

The protein in the N-terminal section; belongs to the enoyl-CoA hydratase/isomerase family. In the central section; belongs to the 3-hydroxyacyl-CoA dehydrogenase family. Heterotetramer of two alpha chains (FadJ) and two beta chains (FadI).

It is found in the cytoplasm. It carries out the reaction a (3S)-3-hydroxyacyl-CoA = a (2E)-enoyl-CoA + H2O. It catalyses the reaction a 4-saturated-(3S)-3-hydroxyacyl-CoA = a (3E)-enoyl-CoA + H2O. The enzyme catalyses a (3S)-3-hydroxyacyl-CoA + NAD(+) = a 3-oxoacyl-CoA + NADH + H(+). The catalysed reaction is (3S)-3-hydroxybutanoyl-CoA = (3R)-3-hydroxybutanoyl-CoA. It participates in lipid metabolism; fatty acid beta-oxidation. Catalyzes the formation of a hydroxyacyl-CoA by addition of water on enoyl-CoA. Also exhibits 3-hydroxyacyl-CoA epimerase and 3-hydroxyacyl-CoA dehydrogenase activities. This chain is Fatty acid oxidation complex subunit alpha, found in Escherichia coli O9:H4 (strain HS).